The following is a 111-amino-acid chain: Gastrula zinc finger protein XlCGF32.1 (111 aa).

C2H2-type zinc fingers lie at residues 6–28, 34–56, 62–84, and 89–111; these read FDCT…FLCH, FVCV…LRIH, SVCP…MRIH, and FMCS…LQIH.

This sequence belongs to the krueppel C2H2-type zinc-finger protein family.

It is found in the nucleus. In terms of biological role, may be involved in transcriptional regulation. The polypeptide is Gastrula zinc finger protein XlCGF32.1 (Xenopus laevis (African clawed frog)).